The following is a 298-amino-acid chain: MEFENIISAADKARILAEALPYIRRFSGSVAVIKYGGNAMTEPALKEGFARDVVLLKLVGIHPVIVHGGGPQINAMLEKVGKKGEFVQGMRVTDKETMDIVEMVLGGHVNKEIVSMINTYGGHAVGVSGRDDHFIKAKKLLVDTPEQNSVDIGQVGTVESIDTGLVKGLIERGCIPVVAPVGVGEKGEAFNINADLVAGKLAEELNAEKLLMMTNIAGVMDKTGNLLTKLTPKRIDGLIADGTLYGGMLPKIASAVEAAVNGVKATHIIDGRLPNALLLEIFTDAGIGSMILGRGEDA.

Substrate-binding positions include 69 to 70 (GG), Arg-91, and Asn-191.

It belongs to the acetylglutamate kinase family. ArgB subfamily.

It localises to the cytoplasm. The enzyme catalyses N-acetyl-L-glutamate + ATP = N-acetyl-L-glutamyl 5-phosphate + ADP. It participates in amino-acid biosynthesis; L-arginine biosynthesis; N(2)-acetyl-L-ornithine from L-glutamate: step 2/4. Catalyzes the ATP-dependent phosphorylation of N-acetyl-L-glutamate. This Neisseria gonorrhoeae (strain ATCC 700825 / FA 1090) protein is Acetylglutamate kinase.